Consider the following 152-residue polypeptide: Transcriptional repressor NrdR (152 aa).

A zinc finger spans residues 3-34; it reads CPFCNAADSKVIDSRLAAEGCQIRRRRECVSC. One can recognise an ATP-cone domain in the interval 49 to 139; the sequence is PRVIKSNGKN…VYQDFQDVEA (91 aa).

It belongs to the NrdR family. The cofactor is Zn(2+).

Negatively regulates transcription of bacterial ribonucleotide reductase nrd genes and operons by binding to NrdR-boxes. In Acinetobacter baumannii (strain AB0057), this protein is Transcriptional repressor NrdR.